The following is a 465-amino-acid chain: MLPSTIQTLTLFLTSGGVLLSLYVSASLSYLLYSDILLKFSPKITAPTMTLDCTNASNVQAVNRSATKEMTFLLPEPEWTYPRLSCQGSTFQKALLISPHRFGEARGNSAPLIIREPFIACGPKECKHFALTHYAAQPGGYYNGTREDRNKLRHLISVKLGKIPTVENSIFHMAAWSGSACHDGREWTYIGVDGPDSNALIKIKYGEAYTDTYHSYANNILRTQESACNCIGGDCYLMITDGSASGISKCRFLKIREGRIIKEIFPTGRVEHTEECTCGFASNKTIECACRDNNYTAKRPFVKLNVETDTAEIRLMCTETYLDTPRPDDGSITGPCESNGDKGRGGIKGGFVHQRMASKIGRWYSRTMSKTERMGMELYVKYDGDPWTDSDALDPSGVMVSIKEPGWYSFGFEIKDKKCDVPCIGIEMVHDGGKKTWHSAATAIYCLMGSGQLLWDTVTGVDMAL.

Residues 1–11 (MLPSTIQTLTL) are Intravirion-facing. A helical membrane pass occupies residues 12–34 (FLTSGGVLLSLYVSASLSYLLYS). Positions 13–35 (LTSGGVLLSLYVSASLSYLLYSD) are involved in apical transport and lipid raft association. Residues 35–465 (DILLKFSPKI…DTVTGVDMAL (431 aa)) are Virion surface-facing. The hypervariable stalk region stretch occupies residues 38–85 (LKFSPKITAPTMTLDCTNASNVQAVNRSATKEMTFLLPEPEWTYPRLS). N-linked (GlcNAc...) asparagine; by host glycosylation is found at Asn-55 and Asn-63. 8 disulfides stabilise this stretch: Cys-86–Cys-419, Cys-121–Cys-126, Cys-181–Cys-228, Cys-230–Cys-235, Cys-276–Cys-290, Cys-278–Cys-288, Cys-317–Cys-336, and Cys-423–Cys-446. The segment at 88-465 (GSTFQKALLI…DTVTGVDMAL (378 aa)) is head of neuraminidase. Arg-115 provides a ligand contact to substrate. A glycan (N-linked (GlcNAc...) asparagine; by host) is linked at Asn-143. Asp-148 (proton donor/acceptor) is an active-site residue. Residue Arg-149 participates in substrate binding. 274-275 (EE) lines the substrate pocket. Asn-283 is a glycosylation site (N-linked (GlcNAc...) asparagine; by host). Position 291 (Arg-291) interacts with substrate. Asp-292 contacts Ca(2+). Residue Asn-294 is glycosylated (N-linked (GlcNAc...) asparagine; by host). Asp-323 contributes to the Ca(2+) binding site. Arg-373 is a substrate binding site. The active-site Nucleophile is Tyr-408.

The protein belongs to the glycosyl hydrolase 34 family. In terms of assembly, homotetramer. The cofactor is Ca(2+). N-glycosylated.

The protein resides in the virion membrane. The protein localises to the host apical cell membrane. The catalysed reaction is Hydrolysis of alpha-(2-&gt;3)-, alpha-(2-&gt;6)-, alpha-(2-&gt;8)- glycosidic linkages of terminal sialic acid residues in oligosaccharides, glycoproteins, glycolipids, colominic acid and synthetic substrates.. Its activity is regulated as follows. Inhibited by the neuraminidase inhibitors zanamivir (Relenza) and oseltamivir (Tamiflu). These drugs interfere with the release of progeny virus from infected cells and are effective against all influenza strains. Resistance to neuraminidase inhibitors is quite rare. Its function is as follows. Catalyzes the removal of terminal sialic acid residues from viral and cellular glycoconjugates. Cleaves off the terminal sialic acids on the glycosylated HA during virus budding to facilitate virus release. Additionally helps virus spread through the circulation by further removing sialic acids from the cell surface. These cleavages prevent self-aggregation and ensure the efficient spread of the progeny virus from cell to cell. Otherwise, infection would be limited to one round of replication. Described as a receptor-destroying enzyme because it cleaves a terminal sialic acid from the cellular receptors. May facilitate viral invasion of the upper airways by cleaving the sialic acid moieties on the mucin of the airway epithelial cells. Likely to plays a role in the budding process through its association with lipid rafts during intracellular transport. May additionally display a raft-association independent effect on budding. Plays a role in the determination of host range restriction on replication and virulence. Sialidase activity in late endosome/lysosome traffic seems to enhance virus replication. The sequence is that of Neuraminidase from Influenza B virus (strain B/Victoria/3/1985).